Reading from the N-terminus, the 40-residue chain is U4-ctenitoxin-Co1c (40 aa).

4 cysteine pairs are disulfide-bonded: Cys-3/Cys-20, Cys-10/Cys-26, Cys-19/Cys-40, and Cys-28/Cys-38.

Expressed by the venom gland.

The protein localises to the secreted. Its function is as follows. Not toxic to mice by intracerebroventricular injection. The chain is U4-ctenitoxin-Co1c from Ctenus ornatus (Brazilian spider).